The chain runs to 418 residues: Putative heat shock protein HSP 90-alpha A4 (418 aa).

Asp-33, Lys-52, Phe-78, and Arg-204 together coordinate ATP. Disordered regions lie at residues 255–289 (EDLELPEDEEEKKKQEEGKQKTKQKKNQSLRTSAK) and 383–418 (GLGTDEDDPTADDTSAAVTEEMPPLEGDDDTSRMEK). The segment covering 265-274 (EKKKQEEGKQ) has biased composition (basic and acidic residues).

The protein belongs to the heat shock protein 90 family. Homodimer.

It localises to the cytoplasm. Functionally, putative molecular chaperone that may promote the maturation, structural maintenance and proper regulation of specific target proteins. This is Putative heat shock protein HSP 90-alpha A4 (HSP90AA4P) from Homo sapiens (Human).